Reading from the N-terminus, the 351-residue chain is Phosphoribosylformylglycinamidine cyclo-ligase (351 aa).

It belongs to the AIR synthase family.

The protein localises to the cytoplasm. It catalyses the reaction 2-formamido-N(1)-(5-O-phospho-beta-D-ribosyl)acetamidine + ATP = 5-amino-1-(5-phospho-beta-D-ribosyl)imidazole + ADP + phosphate + H(+). It participates in purine metabolism; IMP biosynthesis via de novo pathway; 5-amino-1-(5-phospho-D-ribosyl)imidazole from N(2)-formyl-N(1)-(5-phospho-D-ribosyl)glycinamide: step 2/2. This chain is Phosphoribosylformylglycinamidine cyclo-ligase, found in Oleidesulfovibrio alaskensis (strain ATCC BAA-1058 / DSM 17464 / G20) (Desulfovibrio alaskensis).